Consider the following 253-residue polypeptide: 5'-nucleotidase SurE (253 aa).

The a divalent metal cation site is built by Asp8, Asp9, Ser40, and Asn97.

Belongs to the SurE nucleotidase family. A divalent metal cation serves as cofactor.

The protein localises to the cytoplasm. It catalyses the reaction a ribonucleoside 5'-phosphate + H2O = a ribonucleoside + phosphate. Functionally, nucleotidase that shows phosphatase activity on nucleoside 5'-monophosphates. The sequence is that of 5'-nucleotidase SurE from Desulforamulus reducens (strain ATCC BAA-1160 / DSM 100696 / MI-1) (Desulfotomaculum reducens).